Here is a 935-residue protein sequence, read N- to C-terminus: Probable mediator of RNA polymerase II transcription subunit 15c (935 aa).

Positions 1–13 (MEGNTNWKPNEQG) are enriched in polar residues. Disordered regions lie at residues 1–28 (MEGN…WRSQ), 170–190 (NLPT…VSSS), 495–526 (SSVQ…HQMQ), 548–611 (QQVS…PVPG), and 635–654 (SSSK…PPEP). The span at 511–526 (MQQQQPQQGNHQHQMQ) shows a compositional bias: low complexity. Composition is skewed to polar residues over residues 548 to 577 (QQVS…SPQL) and 635 to 644 (SSSKLGTQET).

This sequence belongs to the plant Mediator complex subunit 15 family. In terms of assembly, component of the Mediator complex.

The protein localises to the nucleus. In terms of biological role, component of the Mediator complex, a coactivator involved in the regulated transcription of nearly all RNA polymerase II-dependent genes. Mediator functions as a bridge to convey information from gene-specific regulatory proteins to the basal RNA polymerase II transcription machinery. The Mediator complex, having a compact conformation in its free form, is recruited to promoters by direct interactions with regulatory proteins and serves for the assembly of a functional preinitiation complex with RNA polymerase II and the general transcription factors. The polypeptide is Probable mediator of RNA polymerase II transcription subunit 15c (MED15C) (Arabidopsis thaliana (Mouse-ear cress)).